Consider the following 117-residue polypeptide: Urease subunit beta (117 aa).

The disordered stretch occupies residues 95-117; the sequence is NAVNGKLDGGPHPGVPATERGAK.

This sequence belongs to the urease beta subunit family. Heterotrimer of UreA (gamma), UreB (beta) and UreC (alpha) subunits. Three heterotrimers associate to form the active enzyme.

It localises to the cytoplasm. It catalyses the reaction urea + 2 H2O + H(+) = hydrogencarbonate + 2 NH4(+). It participates in nitrogen metabolism; urea degradation; CO(2) and NH(3) from urea (urease route): step 1/1. This chain is Urease subunit beta, found in Pseudarthrobacter chlorophenolicus (strain ATCC 700700 / DSM 12829 / CIP 107037 / JCM 12360 / KCTC 9906 / NCIMB 13794 / A6) (Arthrobacter chlorophenolicus).